The primary structure comprises 298 residues: Acetylglutamate kinase (298 aa).

Substrate is bound by residues 69-70, arginine 91, and asparagine 196; that span reads GG.

It belongs to the acetylglutamate kinase family. ArgB subfamily.

Its subcellular location is the cytoplasm. The catalysed reaction is N-acetyl-L-glutamate + ATP = N-acetyl-L-glutamyl 5-phosphate + ADP. It participates in amino-acid biosynthesis; L-arginine biosynthesis; N(2)-acetyl-L-ornithine from L-glutamate: step 2/4. Functionally, catalyzes the ATP-dependent phosphorylation of N-acetyl-L-glutamate. The sequence is that of Acetylglutamate kinase from Bradyrhizobium sp. (strain BTAi1 / ATCC BAA-1182).